A 317-amino-acid chain; its full sequence is NAC domain-containing protein 19 (317 aa).

Positions 14-162 (LPPGFRFYPT…DWVLCRIYKK (149 aa)) constitute an NAC domain.

Dimer. Interacts with RHA2A, RHA2B or RHG1A, but not with RHA3A or RHA3B. Expressed in stems, flowers, cauline leaves and rosettes.

It is found in the nucleus. In terms of biological role, transcription factors that bind specifically to the 5'-CATGTG-3' motif. The sequence is that of NAC domain-containing protein 19 (NAC019) from Arabidopsis thaliana (Mouse-ear cress).